The chain runs to 1408 residues: DNA-directed RNA polymerase subunit beta' (1408 aa).

Zn(2+) is bound by residues Cys70, Cys72, Cys85, and Cys88. Mg(2+)-binding residues include Asp460, Asp462, and Asp464. Residues Cys814, Cys887, Cys894, and Cys897 each contribute to the Zn(2+) site.

It belongs to the RNA polymerase beta' chain family. As to quaternary structure, the RNAP catalytic core consists of 2 alpha, 1 beta, 1 beta' and 1 omega subunit. When a sigma factor is associated with the core the holoenzyme is formed, which can initiate transcription. Mg(2+) serves as cofactor. It depends on Zn(2+) as a cofactor.

It carries out the reaction RNA(n) + a ribonucleoside 5'-triphosphate = RNA(n+1) + diphosphate. DNA-dependent RNA polymerase catalyzes the transcription of DNA into RNA using the four ribonucleoside triphosphates as substrates. The sequence is that of DNA-directed RNA polymerase subunit beta' from Hydrogenovibrio crunogenus (strain DSM 25203 / XCL-2) (Thiomicrospira crunogena).